Here is a 65-residue protein sequence, read N- to C-terminus: Sperm protamine P1 (65 aa).

Residues 1–65 form a disordered region; that stretch reads MARYRHSRSR…RYSRRRRRRY (65 aa).

Belongs to the protamine P1 family. In terms of tissue distribution, testis.

Its subcellular location is the nucleus. The protein localises to the chromosome. Protamines substitute for histones in the chromatin of sperm during the haploid phase of spermatogenesis. They compact sperm DNA into a highly condensed, stable and inactive complex. The chain is Sperm protamine P1 (PRM1) from Lagorchestes hirsutus (Rufous hare-wallaby).